Reading from the N-terminus, the 417-residue chain is MMMSCRNIDLGTSVLDHSCSSSSTSRRFLFGNSSKTVCMIGGRSCVGNLVFLRRDLATCRAVPAKSKENSLVNGIGQDQTVMLNLRQESRKPISLETLFEVVADDLQRLNDNLLSIVGAENPVLISAAEQIFSAGGKRMRPGLVFLVSRATAELAGLKELTVEHRRLGEIIEMIHTASLIHDDVLDESDMRRGRETVHELFGTRVAVLAGDFMFAQASWYLANLENLEVIKLISQVIKDFASGEIKQASSLFDCDVKLDDYMLKSYYKTASLVAASTKGAAIFSKVESKVAEQMYQFGKNLGLSFQVVDDILDFTQSTEQLGKPAANDLAKGNITAPVIFALENEPRLREIIESEFCEPGSLEEAIEIVRNRGGIKKAQELAKEKAELALKNLNCLPRSGFRSALEDMVMFNLERID.

Residues 1–60 (MMMSCRNIDLGTSVLDHSCSSSSTSRRFLFGNSSKTVCMIGGRSCVGNLVFLRRDLATCR) constitute a chloroplast transit peptide. Isopentenyl diphosphate contacts are provided by K137, R140, and H175. Residues D182 and D186 each coordinate Mg(2+). R191 is an an all-trans-polyprenyl diphosphate binding site. Position 192 (R192) interacts with isopentenyl diphosphate. Residues K268, T269, Q306, and K323 each coordinate an all-trans-polyprenyl diphosphate.

This sequence belongs to the FPP/GGPP synthase family. In terms of assembly, homodimer. Interacts with FBN5. Requires Mg(2+) as cofactor. In terms of tissue distribution, higher expression in leaves than in roots.

Its subcellular location is the plastid. It localises to the chloroplast. It carries out the reaction 5 isopentenyl diphosphate + (2E,6E,10E)-geranylgeranyl diphosphate = all-trans-nonaprenyl diphosphate + 5 diphosphate. Functionally, involved in providing solanesyl diphosphate for plastoquinone-9 (PQ-9) formation in plastids. Catalyzes the elongation of the prenyl side chain of PQ-9 in plastids. Contributes to the biosynthesis of plastochromanol-8 (PC-8) in plastids. Does not contribute to the synthesis of tocopherol or ubiquinone. PQ-9 and PC-8 are lipophilic antioxidants that act as protectant against photooxidative stress under high light stress conditions. Prefers geranylgeranyl diphosphate to farnesyl diphosphate as substrate. No activity with geranyl diphosphate or dimethylallyl diphosphate as substrate. The chain is Solanesyl diphosphate synthase 2, chloroplastic from Arabidopsis thaliana (Mouse-ear cress).